The following is a 535-amino-acid chain: Probable galacturonosyltransferase 12 (535 aa).

At 1–37 (MQLHISPSLRHVTVVTGKGLREFIKVKVGSRRFSYQM) the chain is on the cytoplasmic side. Residues 38–58 (VFYSLLFFTFLLRFVFVLSTV) traverse the membrane as a helical; Signal-anchor for type II membrane protein segment. Topologically, residues 59–535 (DTIDGDPSPC…FIKSCHIRAS (477 aa)) are lumenal. N-linked (GlcNAc...) asparagine glycosylation is found at N397 and N430.

It belongs to the glycosyltransferase 8 family. In terms of tissue distribution, highly expressed in stems. Detected in roots, inflorescences, siliques, and leaves. Expressed in cells undergoing secondary wall thickening, including interfascicular fibers and primary and secondary xylem.

It localises to the golgi apparatus membrane. It functions in the pathway glycan metabolism; pectin biosynthesis. Its function is as follows. Involved in pectin assembly and/or distribution, and in the synthesis of secondary wall glucuronoxylan. Probably involved in the synthesis of the glycosyl sequence at the glucuronoxylan reducing end. May be involved in synthesis of a complex glycan primer for xylan synthesis. This Arabidopsis thaliana (Mouse-ear cress) protein is Probable galacturonosyltransferase 12 (GAUT12).